Here is a 307-residue protein sequence, read N- to C-terminus: Elongation factor Ts, mitochondrial (307 aa).

Residues 1-19 (MIFTRLTRFVGHGTGLRLY) constitute a mitochondrion transit peptide.

This sequence belongs to the EF-Ts family.

Its subcellular location is the mitochondrion. In terms of biological role, associates with the EF-Tu.GDP complex and induces the exchange of GDP to GTP. It remains bound to the aminoacyl-tRNA.EF-Tu.GTP complex up to the GTP hydrolysis stage on the ribosome. The polypeptide is Elongation factor Ts, mitochondrial (Aedes aegypti (Yellowfever mosquito)).